The chain runs to 222 residues: Charged multivesicular body protein 4a (222 aa).

2 disordered regions span residues 1 to 21 (MSGL…TPEE) and 177 to 222 (LLHV…EWVS). Residues 1 to 116 (MSGLGRLFGR…ELAAQGLKKA (116 aa)) are interaction with phosphoinosides. Positions 1-150 (MSGLGRLFGR…QISDAISRPV (150 aa)) are intramolecular interaction with C-terminus. Coiled coils occupy residues 20–105 (EEAI…VLRT) and 155–180 (DVDE…LLHV). Residues 151-222 (GFGDDVDEDE…ELKQLAEWVS (72 aa)) are intramolecular interaction with N-terminus. S196 carries the phosphoserine modification.

Belongs to the SNF7 family. Probable core component of the endosomal sorting required for transport complex III (ESCRT-III). ESCRT-III components are thought to multimerize to form a flat lattice on the perimeter membrane of the endosome. Several assembly forms of ESCRT-III may exist that interact and act sequentially. Self-associates; overexpression leads to the assembly of filaments that curve and associate to create circular rings. Interacts with CHMP2A. Interacts with CHMP3; the interaction requires the release of CHMP4A autoinhibition. Interacts with CHMP4B. Interacts with CHMP4C. Interacts with CHMP6. Interacts with VPS4A. Interacts with PDCD6IP; the interaction is direct.

Its subcellular location is the cytoplasmic vesicle membrane. The protein resides in the late endosome membrane. In terms of biological role, probable core component of the endosomal sorting required for transport complex III (ESCRT-III) which is involved in multivesicular bodies (MVBs) formation and sorting of endosomal cargo proteins into MVBs. MVBs contain intraluminal vesicles (ILVs) that are generated by invagination and scission from the limiting membrane of the endosome and mostly are delivered to lysosomes enabling degradation of membrane proteins, such as stimulated growth factor receptors, lysosomal enzymes and lipids. The MVB pathway appears to require the sequential function of ESCRT-O, -I,-II and -III complexes. ESCRT-III proteins mostly dissociate from the invaginating membrane before the ILV is released. The ESCRT machinery also functions in topologically equivalent membrane fission events, such as the terminal stages of cytokinesis and the budding of enveloped viruses (lentiviruses). ESCRT-III proteins are believed to mediate the necessary vesicle extrusion and/or membrane fission activities, possibly in conjunction with the AAA ATPase VPS4. When overexpressed, membrane-assembled circular arrays of CHMP4A filaments can promote or stabilize negative curvature and outward budding. CHMP4A/B/C are required for the exosomal release of SDCBP, CD63 and syndecan. This chain is Charged multivesicular body protein 4a (CHMP4A), found in Bos taurus (Bovine).